The primary structure comprises 440 residues: Chromosome partition protein MukF (440 aa).

The interval 208–236 (LSETSGTLRELQDTLEAAGDKLQANLLRI) is leucine-zipper.

This sequence belongs to the MukF family. In terms of assembly, interacts, and probably forms a ternary complex, with MukE and MukB via its C-terminal region. The complex formation is stimulated by calcium or magnesium. It is required for an interaction between MukE and MukB.

The protein localises to the cytoplasm. Its subcellular location is the nucleoid. Functionally, involved in chromosome condensation, segregation and cell cycle progression. May participate in facilitating chromosome segregation by condensation DNA from both sides of a centrally located replisome during cell division. Not required for mini-F plasmid partitioning. Probably acts via its interaction with MukB and MukE. Overexpression results in anucleate cells. It has a calcium binding activity. The protein is Chromosome partition protein MukF of Salmonella arizonae (strain ATCC BAA-731 / CDC346-86 / RSK2980).